A 486-amino-acid chain; its full sequence is BTB/POZ domain and ankyrin repeat-containing protein NBCL (486 aa).

Residues 25–115 (SDVTFSVEGR…LYSGQVSIVP (91 aa)) form the BTB domain. A C2HC NPR-type zinc finger spans residues 121-135 (RPNCGERGCWHTHCS). Positions 124, 129, 131, and 134 each coordinate Zn(2+). 4 ANK repeats span residues 257–286 (QKIR…LNLD), 287–316 (EALA…DVNY), 321–350 (AGKT…DPNV), and 354–388 (DNVT…KLRL). Disordered stretches follow at residues 403-441 (EEGN…NNHN) and 464-486 (QMSD…HHDY). 2 stretches are compositionally biased toward low complexity: residues 406-418 (NANN…TTTT) and 432-441 (SSSSSGNNHN). Positions 466–475 (SDDHGGRHGD) are enriched in basic and acidic residues.

This sequence belongs to the plant 'ANKYRIN-BTB/POZ' family. 'NOOT-BOP-COCH-like' (NBCL) subfamily. Homodimer.

The protein localises to the nucleus. It localises to the cytoplasm. Its subcellular location is the cell membrane. It participates in protein modification; protein ubiquitination. May act as a substrate-specific adapter of an E3 ubiquitin-protein ligase complex (CUL3-RBX1-BTB) which mediates the ubiquitination and subsequent proteasomal degradation of target proteins. Transcriptional co-regulator involved in the promotion of leaf and floral meristem fate and determinacy. Necessary for the development of stipules at the base of petioles. Required for the abscission of senescent organs, probably by regulating the cell wall disorganization in abscission zones (AZs, e.g. pulvini at the base of leaves). Promotes slightly root-cap border cells separation from the root tip. Involved in the coordination of the symbiotic nodule developmental program; promotes the formation of root nodules by interacting directly with APP1 to modulate the expression of the nuclear transcription factor Y subunit (NF-YA1), a key nodulin. Necessary for the robust maintenance of nodule identity throughout the nodule developmental program. The polypeptide is BTB/POZ domain and ankyrin repeat-containing protein NBCL (Lupinus angustifolius (Narrow-leaved blue lupine)).